The following is a 477-amino-acid chain: Glycogen synthase (477 aa).

Lys15 contributes to the ADP-alpha-D-glucose binding site.

This sequence belongs to the glycosyltransferase 1 family. Bacterial/plant glycogen synthase subfamily.

It catalyses the reaction [(1-&gt;4)-alpha-D-glucosyl](n) + ADP-alpha-D-glucose = [(1-&gt;4)-alpha-D-glucosyl](n+1) + ADP + H(+). It participates in glycan biosynthesis; glycogen biosynthesis. Functionally, synthesizes alpha-1,4-glucan chains using ADP-glucose. This Edwardsiella ictaluri (strain 93-146) protein is Glycogen synthase.